A 93-amino-acid polypeptide reads, in one-letter code: uncharacterized protein (93 aa).

This is an uncharacterized protein from Acidianus sp. F28 (AFV-2).